The sequence spans 482 residues: Cardiolipin synthase (482 aa).

Transmembrane regions (helical) follow at residues 4-24 and 34-54; these read LAYL…VTVF and WAWL…YLIF. PLD phosphodiesterase domains are found at residues 217-244 and 395-422; these read LNYR…GDEY and DNGF…DFRS. Active-site residues include His222, Lys224, Asp229, His400, Lys402, and Asp407.

The protein belongs to the phospholipase D family. Cardiolipin synthase subfamily.

It localises to the cell membrane. The catalysed reaction is 2 a 1,2-diacyl-sn-glycero-3-phospho-(1'-sn-glycerol) = a cardiolipin + glycerol. Catalyzes the reversible phosphatidyl group transfer from one phosphatidylglycerol molecule to another to form cardiolipin (CL) (diphosphatidylglycerol) and glycerol. This is Cardiolipin synthase (cls) from Listeria welshimeri serovar 6b (strain ATCC 35897 / DSM 20650 / CCUG 15529 / CIP 8149 / NCTC 11857 / SLCC 5334 / V8).